The following is a 120-amino-acid chain: Holo-[acyl-carrier-protein] synthase (120 aa).

Mg(2+) contacts are provided by Asp8 and Glu58.

It belongs to the P-Pant transferase superfamily. AcpS family. It depends on Mg(2+) as a cofactor.

The protein resides in the cytoplasm. It carries out the reaction apo-[ACP] + CoA = holo-[ACP] + adenosine 3',5'-bisphosphate + H(+). In terms of biological role, transfers the 4'-phosphopantetheine moiety from coenzyme A to a Ser of acyl-carrier-protein. The polypeptide is Holo-[acyl-carrier-protein] synthase (Limosilactobacillus reuteri (strain DSM 20016) (Lactobacillus reuteri)).